A 302-amino-acid polypeptide reads, in one-letter code: Sulfotransferase 1C4 (302 aa).

55–60 (KAGTTW) contacts 3'-phosphoadenylyl sulfate. 113–115 (KTH) serves as a coordination point for substrate. Catalysis depends on histidine 115, which acts as the Proton acceptor. Residues arginine 137, serine 145, tyrosine 200, 234-239 (TSFDVM), and 262-266 (FMRKG) contribute to the 3'-phosphoadenylyl sulfate site.

It belongs to the sulfotransferase 1 family. In terms of tissue distribution, expressed in liver, kidney and jejunum.

It localises to the cytoplasm. The protein localises to the cytosol. It carries out the reaction a phenol + 3'-phosphoadenylyl sulfate = an aryl sulfate + adenosine 3',5'-bisphosphate + H(+). It catalyses the reaction 17beta-estradiol + 3'-phosphoadenylyl sulfate = 17beta-estradiol 3-sulfate + adenosine 3',5'-bisphosphate + H(+). The enzyme catalyses bisphenol A + 3'-phosphoadenylyl sulfate = bisphenyl A sulfate + adenosine 3',5'-bisphosphate + H(+). Its function is as follows. Sulfotransferase that utilizes 3'-phospho-5'-adenylyl sulfate (PAPS) as sulfonate donor to catalyze the sulfate conjugation of phenolic compounds and estrogen (E2). Can also sulfonate estrogenic compounds, however, the dietary flavonoids (phytoestrogen) and environmental estrogens, like bisphenol A are better substrates than 17beta-estradiol (E2). The chain is Sulfotransferase 1C4 (SULT1C4) from Macaca fascicularis (Crab-eating macaque).